Reading from the N-terminus, the 595-residue chain is Trafficking protein particle complex subunit 14 (595 aa).

Disordered regions lie at residues 84–111 (ASVSPGDSRQRTQPLYHDYHSSGDECVE) and 494–513 (SNPPPDARPLSRKNSPSSPA).

In terms of assembly, component of the multisubunit TRAPP II complex, which includes at least TRAPPC1, TRAPPC2, TRAPPC2L, TRAPPC3, TRAPPC4, TRAPPC5, TRAPPC6A/B, TRAPPC9, TRAPPC10 and TRAPPC14. TRAPPC9, TRAPPC10 and TRAPPC14 are specific subunits of the TRAPP II complex. Interacts with alpha-tubulin during mitosis.

It is found in the cytoplasm. Its subcellular location is the cytoskeleton. The protein resides in the spindle. The protein localises to the vesicle. It localises to the midbody. Specific subunit of the TRAPP (transport protein particle) II complex, a highly conserved vesicle tethering complex that functions in late Golgi trafficking as a membrane tether. TRAPP II complex also has GEF activity toward RAB1A. TRAPPC14 is required for ciliogenesis. The chain is Trafficking protein particle complex subunit 14 (trappc14) from Danio rerio (Zebrafish).